We begin with the raw amino-acid sequence, 114 residues long: Dolichyl-diphosphooligosaccharide--protein glycosyltransferase subunit DAD1 (114 aa).

At 1–30 the chain is on the cytoplasmic side; that stretch reads MPRATSDAKLLIQSLGKAYAATPTNLKIID. The chain crosses the membrane as a helical span at residues 31–51; the sequence is LYVVFAVATALIQVVYMGIVG. Topologically, residues 52–54 are lumenal; it reads SFP. The helical transmembrane segment at 55-75 threads the bilayer; that stretch reads FNSFLSGVLSCIGTAVLAVCL. Residues 76 to 93 lie on the Cytoplasmic side of the membrane; the sequence is RIQVNKDNKEFKDLPPER. A helical transmembrane segment spans residues 94–114; that stretch reads AFADFVLCNLVLHLVIMNFLG.

The protein belongs to the DAD/OST2 family. In terms of assembly, component of the oligosaccharyltransferase (OST) complex.

It is found in the endoplasmic reticulum membrane. The protein operates within protein modification; protein glycosylation. In terms of biological role, subunit of the oligosaccharyl transferase (OST) complex that catalyzes the initial transfer of a defined glycan (Glc(3)Man(9)GlcNAc(2) in eukaryotes) from the lipid carrier dolichol-pyrophosphate to an asparagine residue within an Asn-X-Ser/Thr consensus motif in nascent polypeptide chains, the first step in protein N-glycosylation. N-glycosylation occurs cotranslationally and the complex associates with the Sec61 complex at the channel-forming translocon complex that mediates protein translocation across the endoplasmic reticulum (ER). All subunits are required for a maximal enzyme activity. This is Dolichyl-diphosphooligosaccharide--protein glycosyltransferase subunit DAD1 (DAD1) from Oryza sativa subsp. indica (Rice).